A 112-amino-acid chain; its full sequence is uncharacterized protein (112 aa).

Residues 82 to 104 traverse the membrane as a helical segment; that stretch reads IFFGFSIIASYFLKFHLLYVILL.

It is found in the membrane. This is an uncharacterized protein from Pasteurella multocida (strain Pm70).